The chain runs to 380 residues: tRNA(Met) cytidine acetate ligase (380 aa).

ATP-binding positions include 7–20, G101, N151, and R176; that span reads IAEYNPFHNGHLYQ.

This sequence belongs to the TmcAL family.

It is found in the cytoplasm. The enzyme catalyses cytidine(34) in elongator tRNA(Met) + acetate + ATP = N(4)-acetylcytidine(34) in elongator tRNA(Met) + AMP + diphosphate. Catalyzes the formation of N(4)-acetylcytidine (ac(4)C) at the wobble position of elongator tRNA(Met), using acetate and ATP as substrates. First activates an acetate ion to form acetyladenylate (Ac-AMP) and then transfers the acetyl group to tRNA to form ac(4)C34. The chain is tRNA(Met) cytidine acetate ligase from Ligilactobacillus salivarius (strain UCC118) (Lactobacillus salivarius).